The following is a 211-amino-acid chain: MRHYTGIDRLINSFDQALRSLVPGTTAAQRSNPAEQTQAPLTVSDARHVAGLMRVNHSGEVCAQALYHGQALTAKLPNVRLEMEQAAIEEQDHLAWCEDRLKELDSVPSLLNPVWYSLSFGMGAIAGIAGDKYSLGFVAETERQVSSHLQDHLKQLPTHDERSKRILEQMNQDELHHRDTALNAGGVELPVAVKITMTAISKLMTKTSYYI.

The Fe cation site is built by E60, E90, H93, E142, E174, and H177.

It belongs to the COQ7 family. Fe cation serves as cofactor.

The protein localises to the cell membrane. The catalysed reaction is a 5-methoxy-2-methyl-3-(all-trans-polyprenyl)benzene-1,4-diol + AH2 + O2 = a 3-demethylubiquinol + A + H2O. Its pathway is cofactor biosynthesis; ubiquinone biosynthesis. Its function is as follows. Catalyzes the hydroxylation of 2-nonaprenyl-3-methyl-6-methoxy-1,4-benzoquinol during ubiquinone biosynthesis. The polypeptide is 3-demethoxyubiquinol 3-hydroxylase (Acinetobacter baylyi (strain ATCC 33305 / BD413 / ADP1)).